Consider the following 450-residue polypeptide: Phosphoglucosamine mutase (450 aa).

The Phosphoserine intermediate role is filled by S102. Mg(2+)-binding residues include S102, D243, D245, and D247. A Phosphoserine modification is found at S102.

It belongs to the phosphohexose mutase family. Mg(2+) is required as a cofactor. Activated by phosphorylation.

It carries out the reaction alpha-D-glucosamine 1-phosphate = D-glucosamine 6-phosphate. Functionally, catalyzes the conversion of glucosamine-6-phosphate to glucosamine-1-phosphate. The polypeptide is Phosphoglucosamine mutase (Rhizobium rhizogenes (strain K84 / ATCC BAA-868) (Agrobacterium radiobacter)).